Reading from the N-terminus, the 276-residue chain is Undecaprenyl-diphosphatase (276 aa).

The next 8 helical transmembrane spans lie at 2–22, 43–63, 83–103, 111–131, 147–167, 186–206, 224–244, and 255–275; these read LEIL…FLPI, FIDM…VVLY, WTLW…GLPL, LMNW…FIVI, TLPY…LIPG, YVAA…ASLL, LILA…IRFL, and AFGW…ALLA.

This sequence belongs to the UppP family.

The protein localises to the cell membrane. The catalysed reaction is di-trans,octa-cis-undecaprenyl diphosphate + H2O = di-trans,octa-cis-undecaprenyl phosphate + phosphate + H(+). Catalyzes the dephosphorylation of undecaprenyl diphosphate (UPP). Confers resistance to bacitracin. This is Undecaprenyl-diphosphatase from Limosilactobacillus fermentum (strain NBRC 3956 / LMG 18251) (Lactobacillus fermentum).